The following is a 304-amino-acid chain: Acetyl-coenzyme A carboxylase carboxyl transferase subunit beta (304 aa).

In terms of domain architecture, CoA carboxyltransferase N-terminal spans 23 to 292 (VWTKCDSCGQ…PNPEAPREGV (270 aa)). Zn(2+) is bound by residues cysteine 27, cysteine 30, cysteine 46, and cysteine 49. The C4-type zinc-finger motif lies at 27–49 (CDSCGQVLYRAELERNLEVCPKC). A disordered region spans residues 285 to 304 (PEAPREGVVVPPVPDQEPEA). Positions 295-304 (PPVPDQEPEA) are enriched in pro residues.

The protein belongs to the AccD/PCCB family. Acetyl-CoA carboxylase is a heterohexamer composed of biotin carboxyl carrier protein (AccB), biotin carboxylase (AccC) and two subunits each of ACCase subunit alpha (AccA) and ACCase subunit beta (AccD). Zn(2+) is required as a cofactor.

The protein localises to the cytoplasm. The catalysed reaction is N(6)-carboxybiotinyl-L-lysyl-[protein] + acetyl-CoA = N(6)-biotinyl-L-lysyl-[protein] + malonyl-CoA. Its pathway is lipid metabolism; malonyl-CoA biosynthesis; malonyl-CoA from acetyl-CoA: step 1/1. In terms of biological role, component of the acetyl coenzyme A carboxylase (ACC) complex. Biotin carboxylase (BC) catalyzes the carboxylation of biotin on its carrier protein (BCCP) and then the CO(2) group is transferred by the transcarboxylase to acetyl-CoA to form malonyl-CoA. The polypeptide is Acetyl-coenzyme A carboxylase carboxyl transferase subunit beta (Escherichia coli O6:H1 (strain CFT073 / ATCC 700928 / UPEC)).